A 121-amino-acid polypeptide reads, in one-letter code: Small ribosomal subunit protein uS13 (121 aa).

The disordered stretch occupies residues 91-121 (HRKGLPVRGQRTRTNARTRKGKKKTVAGKKK).

Belongs to the universal ribosomal protein uS13 family. As to quaternary structure, part of the 30S ribosomal subunit. Forms a loose heterodimer with protein S19. Forms two bridges to the 50S subunit in the 70S ribosome.

Its function is as follows. Located at the top of the head of the 30S subunit, it contacts several helices of the 16S rRNA. In the 70S ribosome it contacts the 23S rRNA (bridge B1a) and protein L5 of the 50S subunit (bridge B1b), connecting the 2 subunits; these bridges are implicated in subunit movement. Contacts the tRNAs in the A and P-sites. In Treponema denticola (strain ATCC 35405 / DSM 14222 / CIP 103919 / JCM 8153 / KCTC 15104), this protein is Small ribosomal subunit protein uS13.